The sequence spans 443 residues: Probable glycine dehydrogenase (decarboxylating) subunit 1 (443 aa).

This sequence belongs to the GcvP family. N-terminal subunit subfamily. As to quaternary structure, the glycine cleavage system is composed of four proteins: P, T, L and H. In this organism, the P 'protein' is a heterodimer of two subunits.

The enzyme catalyses N(6)-[(R)-lipoyl]-L-lysyl-[glycine-cleavage complex H protein] + glycine + H(+) = N(6)-[(R)-S(8)-aminomethyldihydrolipoyl]-L-lysyl-[glycine-cleavage complex H protein] + CO2. Its function is as follows. The glycine cleavage system catalyzes the degradation of glycine. The P protein binds the alpha-amino group of glycine through its pyridoxal phosphate cofactor; CO(2) is released and the remaining methylamine moiety is then transferred to the lipoamide cofactor of the H protein. This chain is Probable glycine dehydrogenase (decarboxylating) subunit 1, found in Koribacter versatilis (strain Ellin345).